A 33-amino-acid chain; its full sequence is Non-specific lipid-transfer protein (33 aa).

A disulfide bond links Cys-14 and Cys-29.

The protein belongs to the plant LTP family. In terms of assembly, dimer.

Plant non-specific lipid-transfer proteins transfer phospholipids as well as galactolipids across membranes. May play a role in wax or cutin deposition in the cell walls of expanding epidermal cells and certain secretory tissues. Has antibacterial activity against Gram-positive bacteria S.aureus and S.epidermidis and blocks biofilm formation. In a mouse model, also protects against bacterial sepsis and has an anti-inflammatory effect. Exhibits antinociceptive activity upon oral or intraperitoneal application in mice. This Morinda citrifolia (Indian mulberry) protein is Non-specific lipid-transfer protein.